A 586-amino-acid polypeptide reads, in one-letter code: Guanylate-binding protein 5 (586 aa).

The segment at 1-306 (MALEIHMSDP…TYVNAISSGD (306 aa)) is NLRP3-binding. The GTPase domain (Globular) stretch occupies residues 1 to 309 (MALEIHMSDP…NAISSGDLPC (309 aa)). Positions 35-276 (TQPVVVVAIV…FCSYIFSHSM (242 aa)) constitute a GB1/RHD3-type G domain. GTP contacts are provided by residues 45–52 (GLYRTGKS), 67–69 (VAS), 181–182 (RD), and leucine 245. The tract at residues 529-586 (MEIAKQNWLAEQQKMQEQQMQEQAAQLSTTFQAQNRSLLSELQHAQRTVNNDDPCVLL) is required for tetramerization, but not for dimerization. At cysteine 583 the chain carries Cysteine methyl ester. A lipid anchor (S-geranylgeranyl cysteine) is attached at cysteine 583. The propeptide at 584 to 586 (VLL) is removed in mature form.

The protein belongs to the TRAFAC class dynamin-like GTPase superfamily. GB1/RHD3 GTPase family. GB1 subfamily. As to quaternary structure, homodimer; homodimerizes upon GTP-binding, forming a close face-to-face dimer. Heterodimer with other family members, including GBP1, GBP2, GBP3 and GBP4. May also form tetramers (dimer of dimers) in the presence of GTP. Interacts with NLRP3, possibly in its tetrameric form, and promotes PYCARD/ASC polymerization. In terms of assembly, homodimer; homodimerizes upon GTP-binding. GDP-bound form remains homodimeric. Homodimer; homodimerizes upon GTP-binding. GDP-bound is monomeric. In terms of processing, isoprenylation is required for proper subcellular location. Expressed in peripheral blood monocytes (at protein level).

Its subcellular location is the cytoplasmic vesicle membrane. It localises to the golgi apparatus membrane. The protein localises to the cytoplasm. It carries out the reaction GTP + H2O = GDP + phosphate + H(+). Its function is as follows. Interferon (IFN)-inducible GTPase that plays important roles in innate immunity against a diverse range of bacterial, viral and protozoan pathogens. Hydrolyzes GTP, but in contrast to other family members, does not produce GMP. Following infection, recruited to the pathogen-containing vacuoles or vacuole-escaped bacteria and acts as a positive regulator of inflammasome assembly by promoting the release of inflammasome ligands from bacteria. Acts by promoting lysis of pathogen-containing vacuoles, releasing pathogens into the cytosol. Following pathogen release in the cytosol, promotes recruitment of proteins that mediate bacterial cytolysis: this liberates ligands that are detected by inflammasomes, such as lipopolysaccharide (LPS) that activates the non-canonical CASP4/CASP11 inflammasome or double-stranded DNA (dsDNA) that activates the AIM2 inflammasome. As an activator of NLRP3 inflammasome assembly: promotes selective NLRP3 inflammasome assembly in response to microbial and soluble, but not crystalline, agents. Independently of its GTPase activity, acts as an inhibitor of various viruses infectivity, such as HIV-1, Zika and influenza A viruses, by inhibiting FURIN-mediated maturation of viral envelope proteins. Functionally, antigenic tumor-specific truncated splice form. In Homo sapiens (Human), this protein is Guanylate-binding protein 5.